We begin with the raw amino-acid sequence, 216 residues long: ATP phosphoribosyltransferase (216 aa).

It belongs to the ATP phosphoribosyltransferase family. Short subfamily. As to quaternary structure, heteromultimer composed of HisG and HisZ subunits.

Its subcellular location is the cytoplasm. It carries out the reaction 1-(5-phospho-beta-D-ribosyl)-ATP + diphosphate = 5-phospho-alpha-D-ribose 1-diphosphate + ATP. Its pathway is amino-acid biosynthesis; L-histidine biosynthesis; L-histidine from 5-phospho-alpha-D-ribose 1-diphosphate: step 1/9. In terms of biological role, catalyzes the condensation of ATP and 5-phosphoribose 1-diphosphate to form N'-(5'-phosphoribosyl)-ATP (PR-ATP). Has a crucial role in the pathway because the rate of histidine biosynthesis seems to be controlled primarily by regulation of HisG enzymatic activity. In Prochlorococcus marinus (strain MIT 9211), this protein is ATP phosphoribosyltransferase.